The chain runs to 399 residues: Probable aspartate/prephenate aminotransferase (399 aa).

Glycine 39, tryptophan 125, and asparagine 175 together coordinate L-aspartate. Lysine 239 is modified (N6-(pyridoxal phosphate)lysine). Residue arginine 375 coordinates L-aspartate.

It belongs to the class-I pyridoxal-phosphate-dependent aminotransferase family. In terms of assembly, homodimer. The cofactor is pyridoxal 5'-phosphate.

The protein resides in the cytoplasm. The enzyme catalyses L-aspartate + 2-oxoglutarate = oxaloacetate + L-glutamate. The catalysed reaction is L-arogenate + 2-oxoglutarate = prephenate + L-glutamate. In terms of biological role, catalyzes the reversible conversion of aspartate and 2-oxoglutarate to glutamate and oxaloacetate. Can also transaminate prephenate in the presence of glutamate. The chain is Probable aspartate/prephenate aminotransferase (aatA) from Rickettsia typhi (strain ATCC VR-144 / Wilmington).